We begin with the raw amino-acid sequence, 472 residues long: Mothers against decapentaplegic homolog 1 (472 aa).

The 125-residue stretch at 12–136 (PAVKRLLGWK…YKRVDSPVLP (125 aa)) folds into the MH1 domain. Zn(2+) contacts are provided by cysteine 64, cysteine 109, cysteine 121, and histidine 126. The tract at residues 158–238 (NPLHQTEPPM…PPPAYMPPEE (81 aa)) is disordered. Residues 169–182 (QNATFPDSFPQQPA) show a composition bias toward polar residues. The segment covering 188–226 (TPNSPTNSYPSSPNSGTGSTATFPHSPSSSDPGSPFQMP) has biased composition (low complexity). A compositionally biased stretch (pro residues) spans 227–238 (ETPPPAYMPPEE). One can recognise an MH2 domain in the interval 278 to 472 (WCSIVYYELN…SPHNPISSVS (195 aa)).

Belongs to the dwarfin/SMAD family. In terms of assembly, may form trimers with another Smad1 and the co-Smad Smad4.

The protein resides in the cytoplasm. Its subcellular location is the nucleus. Its function is as follows. Involved in ventralization. May mediate Bmp2b signaling during embryonic dorsal-ventral pattern formation, and may itself be a transcriptional target for Smad5-mediated Bmp2b signaling. This is Mothers against decapentaplegic homolog 1 (smad1) from Danio rerio (Zebrafish).